The sequence spans 351 residues: Heat-inducible transcription repressor HrcA (351 aa).

It belongs to the HrcA family.

Functionally, negative regulator of class I heat shock genes (grpE-dnaK-dnaJ and groELS operons). Prevents heat-shock induction of these operons. The sequence is that of Heat-inducible transcription repressor HrcA from Clostridium tetani (strain Massachusetts / E88).